Consider the following 261-residue polypeptide: Lys-63-specific deubiquitinase BRCC36 (261 aa).

Positions 6–149 constitute an MPN domain; it reads VHIQGDAFLV…YTCFQSVQAQ (144 aa). His-92, His-94, and Asp-105 together coordinate Zn(2+). The short motif at 92 to 105 is the JAMM motif element; sequence HSHPHITVWPSHVD.

Belongs to the peptidase M67A family. BRCC36 subfamily. As to quaternary structure, component of the BRCA1-A complex, at least composed of brca1, bard1, uimc1/rap80, abraxas1, brcc3/brcc36, babam2 and babam1/nba1. In the BRCA1-A complex, interacts directly with ABRAXAS1 and babam2. Component of the BRISC complex, at least composed of ABRAXAS2, brcc3/brcc36, babam2 and babam1/nba1. Within the complex, interacts directly with abraxas2. Both the BRCA1-A complex and the BRISC complex bind polyubiquitin. The cofactor is Zn(2+).

The protein resides in the nucleus. It is found in the cytoplasm. Its subcellular location is the cytoskeleton. The protein localises to the spindle pole. Metalloprotease that specifically cleaves 'Lys-63'-linked polyubiquitin chains. Does not have activity toward 'Lys-48'-linked polyubiquitin chains. Component of the BRCA1-A complex, a complex that specifically recognizes 'Lys-63'-linked ubiquitinated histones H2A and H2AX at DNA lesions sites, leading to target the brca1-bard1 heterodimer to sites of DNA damage at double-strand breaks (DSBs). In the BRCA1-A complex, it specifically removes 'Lys-63'-linked ubiquitin on histones H2A and H2AX, antagonizing the rnf8-dependent ubiquitination at double-strand breaks (DSBs). Catalytic subunit of the BRISC complex, a multiprotein complex that specifically cleaves 'Lys-63'-linked ubiquitin in various substrates. Mediates the specific 'Lys-63'-specific deubiquitination associated with the COP9 signalosome complex (CSN), via the interaction of the BRISC complex with the CSN complex. The BRISC complex is required for normal mitotic spindle assembly and microtubule attachment to kinetochores via its role in deubiquitinating numa1. Plays a role in interferon signaling via its role in the deubiquitination of the interferon receptor ifnar1; deubiquitination increases ifnar1 activity by enhancing its stability and cell surface expression. Acts as a regulator of the NLRP3 inflammasome by mediating deubiquitination of nlrp3. Down-regulates the response to bacterial lipopolysaccharide (LPS) via its role in ifnar1 deubiquitination. The polypeptide is Lys-63-specific deubiquitinase BRCC36 (brcc3) (Xenopus laevis (African clawed frog)).